Consider the following 164-residue polypeptide: Phosphopantetheine adenylyltransferase (164 aa).

A substrate-binding site is contributed by serine 10. ATP is bound by residues 10 to 11 (SF) and histidine 18. Residues lysine 42, threonine 79, and arginine 93 each coordinate substrate. Residues 94–96 (GLR), glutamate 104, and 129–135 (VRPIAAT) contribute to the ATP site.

It belongs to the bacterial CoaD family. As to quaternary structure, homohexamer. Mg(2+) serves as cofactor.

The protein resides in the cytoplasm. The catalysed reaction is (R)-4'-phosphopantetheine + ATP + H(+) = 3'-dephospho-CoA + diphosphate. It functions in the pathway cofactor biosynthesis; coenzyme A biosynthesis; CoA from (R)-pantothenate: step 4/5. Reversibly transfers an adenylyl group from ATP to 4'-phosphopantetheine, yielding dephospho-CoA (dPCoA) and pyrophosphate. The sequence is that of Phosphopantetheine adenylyltransferase from Bradyrhizobium sp. (strain BTAi1 / ATCC BAA-1182).